We begin with the raw amino-acid sequence, 142 residues long: Large ribosomal subunit protein uL11 (142 aa).

This sequence belongs to the universal ribosomal protein uL11 family. Part of the ribosomal stalk of the 50S ribosomal subunit. Interacts with L10 and the large rRNA to form the base of the stalk. L10 forms an elongated spine to which L12 dimers bind in a sequential fashion forming a multimeric L10(L12)X complex. Post-translationally, one or more lysine residues are methylated.

Its function is as follows. Forms part of the ribosomal stalk which helps the ribosome interact with GTP-bound translation factors. In Shigella boydii serotype 4 (strain Sb227), this protein is Large ribosomal subunit protein uL11.